Consider the following 300-residue polypeptide: tRNA U34 carboxymethyltransferase (300 aa).

Residues lysine 73, tryptophan 87, lysine 92, glycine 111, aspartate 133–serine 135, valine 160–glutamate 161, tyrosine 180, and arginine 293 each bind carboxy-S-adenosyl-L-methionine.

This sequence belongs to the class I-like SAM-binding methyltransferase superfamily. CmoB family. As to quaternary structure, homotetramer.

It catalyses the reaction carboxy-S-adenosyl-L-methionine + 5-hydroxyuridine(34) in tRNA = 5-carboxymethoxyuridine(34) in tRNA + S-adenosyl-L-homocysteine + H(+). Functionally, catalyzes carboxymethyl transfer from carboxy-S-adenosyl-L-methionine (Cx-SAM) to 5-hydroxyuridine (ho5U) to form 5-carboxymethoxyuridine (cmo5U) at position 34 in tRNAs. The polypeptide is tRNA U34 carboxymethyltransferase (Nautilia profundicola (strain ATCC BAA-1463 / DSM 18972 / AmH)).